The primary structure comprises 404 residues: Cysteine desulfurase IscS (404 aa).

Residues 75–76, Asn155, Gln183, and 203–205 each bind pyridoxal 5'-phosphate; these read AT and TSH. Lys206 carries the post-translational modification N6-(pyridoxal phosphate)lysine. Thr243 contributes to the pyridoxal 5'-phosphate binding site. The active-site Cysteine persulfide intermediate is Cys328. Residue Cys328 coordinates [2Fe-2S] cluster.

Belongs to the class-V pyridoxal-phosphate-dependent aminotransferase family. NifS/IscS subfamily. Homodimer. Forms a heterotetramer with IscU, interacts with other sulfur acceptors. The cofactor is pyridoxal 5'-phosphate.

The protein resides in the cytoplasm. The enzyme catalyses (sulfur carrier)-H + L-cysteine = (sulfur carrier)-SH + L-alanine. Its pathway is cofactor biosynthesis; iron-sulfur cluster biosynthesis. Master enzyme that delivers sulfur to a number of partners involved in Fe-S cluster assembly, tRNA modification or cofactor biosynthesis. Catalyzes the removal of elemental sulfur atoms from cysteine to produce alanine. Functions as a sulfur delivery protein for Fe-S cluster synthesis onto IscU, an Fe-S scaffold assembly protein, as well as other S acceptor proteins. In Photobacterium profundum (strain SS9), this protein is Cysteine desulfurase IscS.